A 309-amino-acid polypeptide reads, in one-letter code: Ribosomal RNA small subunit methyltransferase H (309 aa).

S-adenosyl-L-methionine-binding positions include Gly34 to His36, Asp54, Phe80, Asp102, and Gln109.

Belongs to the methyltransferase superfamily. RsmH family.

The protein resides in the cytoplasm. It carries out the reaction cytidine(1402) in 16S rRNA + S-adenosyl-L-methionine = N(4)-methylcytidine(1402) in 16S rRNA + S-adenosyl-L-homocysteine + H(+). Specifically methylates the N4 position of cytidine in position 1402 (C1402) of 16S rRNA. This is Ribosomal RNA small subunit methyltransferase H from Cellvibrio japonicus (strain Ueda107) (Pseudomonas fluorescens subsp. cellulosa).